A 396-amino-acid polypeptide reads, in one-letter code: Cyclic GMP-AMP synthase-like receptor (396 aa).

ATP is bound by residues S63 and 75–77 (EFD). Residues E75, D77, and D194 each contribute to the Mg(2+) site. A GTP-binding site is contributed by D194. ATP contacts are provided by residues 241-244 (QEQE), K262, and 275-279 (SYYLK). Residues V286, E287, and D292 each coordinate Mn(2+). The tract at residues 376–396 (IMNGGNPQQSANAENGSCLSM) is disordered. Residues 380–396 (GNPQQSANAENGSCLSM) show a composition bias toward polar residues.

Belongs to the mab-21 family. Requires Mg(2+) as cofactor. It depends on Mn(2+) as a cofactor.

It carries out the reaction GTP + ATP = 2',3'-cGAMP + 2 diphosphate. The catalysed reaction is GTP + ATP = pppGp(2'-5')A + diphosphate. It catalyses the reaction pppGp(2'-5')A = 2',3'-cGAMP + diphosphate. Nucleotidyltransferase that catalyzes the formation of cyclic GMP-AMP (2',3'-cGAMP) from ATP and GTP and plays a key role in innate immunity. Acts as a key sensor of double-stranded RNA (dsRNA), the presence of dsRNA in the cytoplasm being a danger signal that triggers the immune responses. Directly binds dsRNA, activating the nucleotidyltransferase activity, leading to synthesis of 2',3'-cGAMP, a second messenger that binds to and activates Sting, thereby triggering the immune response via activation of the NF-kappa-B transcription factor. The polypeptide is Cyclic GMP-AMP synthase-like receptor (Aethina tumida (Small hive beetle)).